Reading from the N-terminus, the 126-residue chain is Glycine cleavage system H protein (126 aa).

The region spanning 24–106 (TITVGITDHA…YGEGWFFRMK (83 aa)) is the Lipoyl-binding domain. The residue at position 65 (Lys-65) is an N6-lipoyllysine.

The protein belongs to the GcvH family. The glycine cleavage system is composed of four proteins: P, T, L and H. (R)-lipoate serves as cofactor.

The glycine cleavage system catalyzes the degradation of glycine. The H protein shuttles the methylamine group of glycine from the P protein to the T protein. In Psychrobacter arcticus (strain DSM 17307 / VKM B-2377 / 273-4), this protein is Glycine cleavage system H protein.